The following is a 910-amino-acid chain: DNA mismatch repair protein MutS (910 aa).

658–665 (GPNMGGKS) is a binding site for ATP.

Belongs to the DNA mismatch repair MutS family.

Functionally, this protein is involved in the repair of mismatches in DNA. It is possible that it carries out the mismatch recognition step. This protein has a weak ATPase activity. The chain is DNA mismatch repair protein MutS from Brucella anthropi (strain ATCC 49188 / DSM 6882 / CCUG 24695 / JCM 21032 / LMG 3331 / NBRC 15819 / NCTC 12168 / Alc 37) (Ochrobactrum anthropi).